The following is a 73-amino-acid chain: uncharacterized protein (73 aa).

The N-terminal stretch at Met-1 to Asp-22 is a signal peptide. A helical membrane pass occupies residues Thr-44–Tyr-66.

It localises to the membrane. This is an uncharacterized protein from Bacillus subtilis (strain 168).